We begin with the raw amino-acid sequence, 339 residues long: Phenylalanine--tRNA ligase alpha subunit (339 aa).

Basic and acidic residues predominate over residues 1–14 (MEAKLKQLEEKAKQ). Residues 1 to 20 (MEAKLKQLEEKAKQDIQAST) form a disordered region. Glu254 is a Mg(2+) binding site.

The protein belongs to the class-II aminoacyl-tRNA synthetase family. Phe-tRNA synthetase alpha subunit type 1 subfamily. In terms of assembly, tetramer of two alpha and two beta subunits. It depends on Mg(2+) as a cofactor.

It localises to the cytoplasm. The catalysed reaction is tRNA(Phe) + L-phenylalanine + ATP = L-phenylalanyl-tRNA(Phe) + AMP + diphosphate + H(+). The sequence is that of Phenylalanine--tRNA ligase alpha subunit from Alkaliphilus metalliredigens (strain QYMF).